The chain runs to 470 residues: MGSGRVRVRFAPSPTGIFHVGGARSALFNWLVARRAGGDFVLRVEDTDASRNRPEWTDGIISALDWLGISPGGYEGPVLQSSRADRHRAAAERLHAEGLAYYCDCTREALAERTGNAQRGYDGFCRDRGLAPGPGRALRFRTPDDGVTIVEDLIRGTPEFPNETIEDFVVARADGSAVFLLANVVDDLEMGITHVIRGEEHLSNTPKQQLLWAALGADAPPVWAHVPVIVNEKRQKLSKRRDKVALESYRDEGYLPAAMKNYLMLLGWAPPGEDEIVPWETIESTFDLADVKPSPAFFDEKKLKAFNGEYIRRLSVAEFIEAVRPWLSAPAAPWEPAAFDADAFAALAPLAQSRVSVLSEIVPMVDFLFLPEAPIDDAAWAKAMKGPAAELLADVHDLYDKIEWEAETLKAGLTEVGERHGLKLGKAQAPVRVAVTGRSVGLPLFESLEALGRETTLRRLAEARERLTGG.

The 'HIGH' region motif lies at Pro12–Gly22. The Zn(2+) site is built by Cys103, Cys105, Cys125, and Asp127. The 'KMSKS' region motif lies at Lys236–Arg240. Lys239 contacts ATP.

Belongs to the class-I aminoacyl-tRNA synthetase family. Glutamate--tRNA ligase type 1 subfamily. Monomer. Zn(2+) is required as a cofactor.

It is found in the cytoplasm. The enzyme catalyses tRNA(Glu) + L-glutamate + ATP = L-glutamyl-tRNA(Glu) + AMP + diphosphate. Its function is as follows. Catalyzes the attachment of glutamate to tRNA(Glu) in a two-step reaction: glutamate is first activated by ATP to form Glu-AMP and then transferred to the acceptor end of tRNA(Glu). The chain is Glutamate--tRNA ligase from Frankia casuarinae (strain DSM 45818 / CECT 9043 / HFP020203 / CcI3).